Here is a 190-residue protein sequence, read N- to C-terminus: Imidazoleglycerol-phosphate dehydratase (190 aa).

The protein belongs to the imidazoleglycerol-phosphate dehydratase family.

It localises to the cytoplasm. The catalysed reaction is D-erythro-1-(imidazol-4-yl)glycerol 3-phosphate = 3-(imidazol-4-yl)-2-oxopropyl phosphate + H2O. Its pathway is amino-acid biosynthesis; L-histidine biosynthesis; L-histidine from 5-phospho-alpha-D-ribose 1-diphosphate: step 6/9. This is Imidazoleglycerol-phosphate dehydratase from Methanococcus maripaludis (strain C7 / ATCC BAA-1331).